Reading from the N-terminus, the 79-residue chain is Dolichyl-diphosphooligosaccharide--protein glycosyltransferase subunit DAD1 (79 aa).

At 1–19 the chain is on the lumenal side; it reads AVATALIQVAYMGLVGSFP. Residues 20–40 traverse the membrane as a helical segment; it reads FNSFLSGVLSCIGTAVLAVCL. At 41 to 58 the chain is on the cytoplasmic side; the sequence is RIQVNKDNKEFKDLPPER. A helical transmembrane segment spans residues 59–79; it reads AFADFVLCNLVLHLVIMNFLG.

The protein belongs to the DAD/OST2 family. Component of the oligosaccharyltransferase (OST) complex.

Its subcellular location is the endoplasmic reticulum membrane. The protein operates within protein modification; protein glycosylation. Its function is as follows. Subunit of the oligosaccharyl transferase (OST) complex that catalyzes the initial transfer of a defined glycan (Glc(3)Man(9)GlcNAc(2) in eukaryotes) from the lipid carrier dolichol-pyrophosphate to an asparagine residue within an Asn-X-Ser/Thr consensus motif in nascent polypeptide chains, the first step in protein N-glycosylation. N-glycosylation occurs cotranslationally and the complex associates with the Sec61 complex at the channel-forming translocon complex that mediates protein translocation across the endoplasmic reticulum (ER). All subunits are required for a maximal enzyme activity. The polypeptide is Dolichyl-diphosphooligosaccharide--protein glycosyltransferase subunit DAD1 (DAD1) (Zea mays (Maize)).